Here is a 449-residue protein sequence, read N- to C-terminus: Probable glycine dehydrogenase (decarboxylating) subunit 1 (449 aa).

It belongs to the GcvP family. N-terminal subunit subfamily. As to quaternary structure, the glycine cleavage system is composed of four proteins: P, T, L and H. In this organism, the P 'protein' is a heterodimer of two subunits.

It carries out the reaction N(6)-[(R)-lipoyl]-L-lysyl-[glycine-cleavage complex H protein] + glycine + H(+) = N(6)-[(R)-S(8)-aminomethyldihydrolipoyl]-L-lysyl-[glycine-cleavage complex H protein] + CO2. Functionally, the glycine cleavage system catalyzes the degradation of glycine. The P protein binds the alpha-amino group of glycine through its pyridoxal phosphate cofactor; CO(2) is released and the remaining methylamine moiety is then transferred to the lipoamide cofactor of the H protein. This chain is Probable glycine dehydrogenase (decarboxylating) subunit 1, found in Pyrococcus horikoshii (strain ATCC 700860 / DSM 12428 / JCM 9974 / NBRC 100139 / OT-3).